Here is a 253-residue protein sequence, read N- to C-terminus: MSESPYKAGTTHFGFRDVAAKDKQKLVGQVFTSVARNYDLMNDLMSLGVHRAWKRYYVATAQVKPGDRVLDLAGGTGDIAALLKERVGAEGSVVLGDINAGMLSVGRDRLTNRGLVLGLDYVQCNAEALPFLDNSFDLVTIAFGLRNVTDKDAGLREMYRVLKVGGQARVLEFSEVTADWFKPIYDFHSFKILPKLGKLFANDSDSYQYLAESIRKHPPQDELKAMMGQAGFERCHYKNLTGGIVSIHSGYKL.

Residues Thr-76, Asp-97, and 125–126 (NA) each bind S-adenosyl-L-methionine.

Belongs to the class I-like SAM-binding methyltransferase superfamily. MenG/UbiE family.

The enzyme catalyses a 2-demethylmenaquinol + S-adenosyl-L-methionine = a menaquinol + S-adenosyl-L-homocysteine + H(+). The catalysed reaction is a 2-methoxy-6-(all-trans-polyprenyl)benzene-1,4-diol + S-adenosyl-L-methionine = a 5-methoxy-2-methyl-3-(all-trans-polyprenyl)benzene-1,4-diol + S-adenosyl-L-homocysteine + H(+). The protein operates within quinol/quinone metabolism; menaquinone biosynthesis; menaquinol from 1,4-dihydroxy-2-naphthoate: step 2/2. Its pathway is cofactor biosynthesis; ubiquinone biosynthesis. Methyltransferase required for the conversion of demethylmenaquinol (DMKH2) to menaquinol (MKH2) and the conversion of 2-polyprenyl-6-methoxy-1,4-benzoquinol (DDMQH2) to 2-polyprenyl-3-methyl-6-methoxy-1,4-benzoquinol (DMQH2). This chain is Ubiquinone/menaquinone biosynthesis C-methyltransferase UbiE, found in Stenotrophomonas maltophilia (strain K279a).